A 189-amino-acid polypeptide reads, in one-letter code: Glycerol-3-phosphate acyltransferase (189 aa).

5 helical membrane passes run 1-21 (MFWL…AILL), 51-71 (LAVL…LIAH), 77-97 (LQQQ…PLYF), 111-131 (MLLG…ALTF), and 151-171 (LLAW…LLIV).

Belongs to the PlsY family. As to quaternary structure, probably interacts with PlsX.

Its subcellular location is the cell inner membrane. The catalysed reaction is an acyl phosphate + sn-glycerol 3-phosphate = a 1-acyl-sn-glycero-3-phosphate + phosphate. It participates in lipid metabolism; phospholipid metabolism. Functionally, catalyzes the transfer of an acyl group from acyl-phosphate (acyl-PO(4)) to glycerol-3-phosphate (G3P) to form lysophosphatidic acid (LPA). This enzyme utilizes acyl-phosphate as fatty acyl donor, but not acyl-CoA or acyl-ACP. The protein is Glycerol-3-phosphate acyltransferase of Pseudomonas fluorescens (strain ATCC BAA-477 / NRRL B-23932 / Pf-5).